We begin with the raw amino-acid sequence, 174 residues long: Small ribosomal subunit protein uS5 (174 aa).

One can recognise an S5 DRBM domain in the interval W17 to V80.

Belongs to the universal ribosomal protein uS5 family. In terms of assembly, part of the 30S ribosomal subunit. Contacts proteins S4 and S8.

Its function is as follows. With S4 and S12 plays an important role in translational accuracy. Functionally, located at the back of the 30S subunit body where it stabilizes the conformation of the head with respect to the body. This Thermosynechococcus vestitus (strain NIES-2133 / IAM M-273 / BP-1) protein is Small ribosomal subunit protein uS5.